The following is a 193-amino-acid chain: dCTP deaminase (193 aa).

DCTP-binding positions include 110 to 115 (RSSLAR), D128, 136 to 138 (VLE), Y171, K178, and Q182. E138 serves as the catalytic Proton donor/acceptor. The interval 174–193 (RKSAKYKDQQEAVASRISQD) is disordered.

This sequence belongs to the dCTP deaminase family. In terms of assembly, homotrimer.

The catalysed reaction is dCTP + H2O + H(+) = dUTP + NH4(+). It functions in the pathway pyrimidine metabolism; dUMP biosynthesis; dUMP from dCTP (dUTP route): step 1/2. Functionally, catalyzes the deamination of dCTP to dUTP. The chain is dCTP deaminase from Shewanella baltica (strain OS223).